Consider the following 2498-residue polypeptide: MTIRSAEEDPRRLLEEFNLTDNAATLGSCFPWLFEQAAHAHFDRTAVICGDAQLTYGTLNGRANIIAQILVNRNIGSGDVVGVALDRSVDLLVVLLAVMKSGAAYVPIDPALPAQRILQMMNDTAPKVVLTDHSVLDTLSLWNGPQLSIEELRVEMSLNPANTPNIRRDIQPEDLAYVIYTSGSTGKPKGVEISHGAVANFVLSMQVVPGCNKHDRILAVSTISFDMTLWDLYAPLACGACTVIAQTHEQKDAEALIELIRENGITSMLATPATWQMLFHAGWQGQPRLKTIKTGGESLSQHLSERLLAAAEKVYNGYGPTEATGCVSLWPVQAGEEVLIGTPIANTKLYVLDADLSPMPLGCAGELYIGGAGVACGYRNNPELTRSRFLANPFHEGLMYRTGDLACLVTPKKLKFLGRADSQVKIRGQRLELGEVEAAITSHGDVAHAIVINREGQLAAYCVRDLHRAVEIDPAKVSLSSILRPWLVERLPAYMVPSFIMEVDHIPLTLNGKVDHKSLPAPMAETTTTNQPATELERDIAAIWSTVLGHDHIGRDDNFFQIGGDSVRLVRMQADLKKLLGRSVPITVLFQQYTIKSLAGYLMDMDRPIPADESIHQPNPKPHHVDSDDIAVVSMACRLPGGIETPEAFWELLERGGDATTDVPPERWDADALYDPDPDAPGKSYCRRGGFVPSFGAFDTKFFHLLPNEARALDPAQYIMLETSWEAFERAGYRTQQLRGSSTGVFIGVNNTVAHGSPSTHAHGLADLQGYTGTGTAGGTMSGRVSYVLGLEGPSLTIDTACSSSLVATHLACTALRQGECDMAVTGAVTHLPAPGLHVEFSRLRGVAPDGRCRAFAADAQGIGIAEGAAVVVLKRLSDARRDGDTIYGVLRGSAVNHGGQGAAGLTVPSGAAQERVIRAALASSRLLPDDIDYIEAHGTGTRLGDPIEGMALTEVFGGSRSNTSQSLWIGSSKTNVGHTQAAAGLVGLIKVLLALRYNTLPPTLHITQPTPAIDWHRANMAPVQTKQHWLAGGERPRRAGVSSFGIGGTNAHVIVEEPPRCSVSTESTLYVPLPHPVPFLLSSPVEAGLQPQADKLHMYLSQSMSKGDPGNIAYSLATTRNHFPQRIVLLAQDTTDLVAQLVDLPRKAIVSPRGSSPEPRLAMLFAGQGSQQLGRGKTLAKHYRVFRETLEEIATQFYGILQEPLLDVMHAAADSALAALLQRSDYAQPALFALEVALWRLWQSWGVQPDMVLGHSIGELTAAHIAGVMDLPDACRLVAARGRLMETLPCHGGMASLEASASEVSLAITTLDLGGQVGIAAYNTPSQTVISGDRDALDILIAYFSGQDRQSKTLPVSRAFHSHHIDGMLTAYQAVVQSVQLNAPSLPIVSTLTGRRVEPCELQQPTYWVRQAREAVRYSDGIQALADHGMNVFLELGPQSVLCGMGAAVLDGSENRTTWLPSLAPNKDEVVAIQEILARLHVQHVPVNWQGYFQPFGCRRLELPTYAFQRERVHSGTKERDHGKREARPQASAFYDKVFQIDWRPFAIQHVQPRGIWGLQCSSGYVKWAEAVRAALFQGGIQCILLPSLSLQGTKTLDGVLCLWDSHGDVISQVHEFAAQGLTQLKEAANTRPSLPLVWLTSQAVGTARDDQPLALGAGLLWGLMRTARNEHPERSLRLIDLGRDDQNRVDASGLAPLLMLHTEPECALRQGMVLVPRMQRMELEFGDATQTLLRSDGAVLITGGLSGLGARIAEWLASTHGIRDLVLTSRRGMDTPGAATLVRRLAHLGTKTTVVSGDTTDPSHLNSLLSMFSHARPLRGVVHAAGVRDTSMLGTSTPQRCVGALAPKVIGAWYLHQFTRTRNDLDLFVVVSSFWGVMGTSGHATDAAANAVLDSLVYTRQSQGLPAVCVAYGPLPDINIPPGLLPTIRDQLQQMGIKTLTPDDTISLFELAARRSHGVTVAAALDLHQLQSYSSQRGGIPALLRLLLDRDTPQKHQGPALYDVLRRTAPDQRREILLRTIQEAVATTLGFSQPDEVDIHRSLPDMGIDSLGALLVRNQLAGLLGQALPANIVFIHPSLDELSRYLLPQLVDSNRDASSVAEPDMASASTAADVSGLNLMAIRKGCVDSSFTFDNALPKPTPQSVFVTGATEFVGAFLVHELLDQGKVTYCLVHAHSIDHARQQIVSWLQDYNLWKIGYAELLRPLVGDVCQVRLGLDESVFDDLAHRVDTIYHASCLVDWMRPLDDYIGPNVTSTHEVLRLASTSHAKTIHYLSTSATLPYHLGYDIPEDALTYGYAMSKLMAERMVIAARCRGAQAFIYRLPFITASATSGHFQLNNRDFLHNLISGSLEMGCFPSLDADLSLVFPVDYVCRTIITLAHTTPGSTHIRYDYDFKNPQAQSFDHYFNLLATVGKDLESLAFSTWRQRALAYAAAKPASSLTSIADILKNSTEEAVVKMFQCPPIVTPFLGGEEFPVPSVNDQSVRKYLHRMDLTL.

Residues 34–427 are adenylation (A) domain; the sequence is FEQAAHAHFD…GRADSQVKIR (394 aa). Residues 531–606 enclose the Carrier 1 domain; sequence QPATELERDI…SLAGYLMDMD (76 aa). The residue at position 566 (S566) is an O-(pantetheine 4'-phosphoryl)serine. The Ketosynthase family 3 (KS3) domain maps to 627 to 1058; the sequence is SDDIAVVSMA…GTNAHVIVEE (432 aa). Catalysis depends on for beta-ketoacyl synthase activity residues C802, H938, and H979. Positions 1165–1485 are malonyl-CoA:ACP transacylase (MAT) domain; that stretch reads LFAGQGSQQL…EILARLHVQH (321 aa). The ketoreductase (KR) domain stretch occupies residues 1739-1917; it reads GAVLITGGLS…PAVCVAYGPL (179 aa). Positions 2017-2092 constitute a Carrier 2 domain; sequence EILLRTIQEA…ELSRYLLPQL (76 aa). The residue at position 2052 (S2052) is an O-(pantetheine 4'-phosphoryl)serine. The interval 2149–2378 is thioester reductase (TE) domain; that stretch reads VTGATEFVGA…FPVDYVCRTI (230 aa).

It in the C-terminal section; belongs to the NRP synthetase family. The cofactor is pantetheine 4'-phosphate.

It participates in secondary metabolite biosynthesis. Its function is as follows. PKS-NRPS hybrid synthetase; part of the gene cluster that mediates the biosynthesis of aspcandine, a pyrrolobenzazepine alkaloid. Initially, the indoleamine 2,3-dioxygenase acdA accepts L-tryptophan and performs the oxidative opening of the indole ring to yield N'-formyl-L-kynurenine, which undergoes the spontaneous deformylation reaction to provide L-kynurenine. The kynurenine 3-monooxygenase acdD then hydroxylates L-kynurenine to afford 3-hydroxy-L-kynurenine. 3-hydroxy-L-kynurenine is activated by the A domain of the NRPS-PKS acdB and subsequently loaded onto the enzyme. The KS domain conducts the decarboxylative condensation of the 3-hydroxy-L-kynurenyl and malonyl moieties, and subsequent nucleophilic attacks by the two amino groups would occur nonenzymatically at two distinct positions, achieving the chain release and the construction of the tricyclic system. Finally, a dehydration reaction completes the biosynthesis to yield aspcandine. The sequence is that of PKS-NRPS hybrid synthetase acdB from Aspergillus candidus.